The sequence spans 112 residues: Putative pterin-4-alpha-carbinolamine dehydratase (112 aa).

The protein belongs to the pterin-4-alpha-carbinolamine dehydratase family.

It catalyses the reaction (4aS,6R)-4a-hydroxy-L-erythro-5,6,7,8-tetrahydrobiopterin = (6R)-L-erythro-6,7-dihydrobiopterin + H2O. The sequence is that of Putative pterin-4-alpha-carbinolamine dehydratase from Shewanella putrefaciens (strain CN-32 / ATCC BAA-453).